Consider the following 925-residue polypeptide: Colossin-D (925 aa).

The first 26 residues, 1–26, serve as a signal peptide directing secretion; the sequence is MIKVFKDLKFLILITIILLNLKSINC. Residues asparagine 47, asparagine 95, asparagine 142, asparagine 166, asparagine 283, asparagine 334, asparagine 344, asparagine 378, asparagine 401, asparagine 511, and asparagine 642 are each glycosylated (N-linked (GlcNAc...) asparagine).

This sequence belongs to the serine-aspartate repeat-containing protein (SDr) family.

The protein resides in the secreted. This Dictyostelium discoideum (Social amoeba) protein is Colossin-D (colD).